Reading from the N-terminus, the 194-residue chain is Erythropoietin (194 aa).

The N-terminal stretch at 1–26 is a signal peptide; sequence MGARECPARLLLLSLLLLPLGLPVLG. 2 disulfide bridges follow: Cys-33–Cys-189 and Cys-55–Cys-59. Residue Asn-50 is glycosylated (N-linked (GlcNAc...) asparagine). Asn-64, Asn-109, and Asn-172 each carry an N-linked (GlcNAc...) asparagine glycan.

The protein belongs to the EPO/TPO family. As to expression, produced by kidney or liver of adult mammals and by liver of fetal or neonatal mammals.

Its subcellular location is the secreted. In terms of biological role, hormone involved in the regulation of erythrocyte proliferation and differentiation and the maintenance of a physiological level of circulating erythrocyte mass. Binds to EPOR leading to EPOR dimerization and JAK2 activation thereby activating specific downstream effectors, including STAT1 and STAT3. This chain is Erythropoietin (EPO), found in Sus scrofa (Pig).